Reading from the N-terminus, the 157-residue chain is 2-C-methyl-D-erythritol 2,4-cyclodiphosphate synthase (157 aa).

A divalent metal cation contacts are provided by aspartate 8 and histidine 10. 4-CDP-2-C-methyl-D-erythritol 2-phosphate contacts are provided by residues 8–10 (DVH) and 34–35 (HS). Position 42 (histidine 42) interacts with a divalent metal cation. Residues 56–58 (DIG), 61–65 (FPDTD), 132–135 (TTTE), phenylalanine 139, and arginine 142 contribute to the 4-CDP-2-C-methyl-D-erythritol 2-phosphate site.

This sequence belongs to the IspF family. In terms of assembly, homotrimer. Requires a divalent metal cation as cofactor.

It carries out the reaction 4-CDP-2-C-methyl-D-erythritol 2-phosphate = 2-C-methyl-D-erythritol 2,4-cyclic diphosphate + CMP. Its pathway is isoprenoid biosynthesis; isopentenyl diphosphate biosynthesis via DXP pathway; isopentenyl diphosphate from 1-deoxy-D-xylulose 5-phosphate: step 4/6. Its function is as follows. Involved in the biosynthesis of isopentenyl diphosphate (IPP) and dimethylallyl diphosphate (DMAPP), two major building blocks of isoprenoid compounds. Catalyzes the conversion of 4-diphosphocytidyl-2-C-methyl-D-erythritol 2-phosphate (CDP-ME2P) to 2-C-methyl-D-erythritol 2,4-cyclodiphosphate (ME-CPP) with a corresponding release of cytidine 5-monophosphate (CMP). The polypeptide is 2-C-methyl-D-erythritol 2,4-cyclodiphosphate synthase (Pseudomonas putida (strain W619)).